The following is a 256-amino-acid chain: Imidazole glycerol phosphate synthase subunit HisF (256 aa).

Active-site residues include Asp-12 and Asp-131.

This sequence belongs to the HisA/HisF family. Heterodimer of HisH and HisF.

The protein localises to the cytoplasm. The catalysed reaction is 5-[(5-phospho-1-deoxy-D-ribulos-1-ylimino)methylamino]-1-(5-phospho-beta-D-ribosyl)imidazole-4-carboxamide + L-glutamine = D-erythro-1-(imidazol-4-yl)glycerol 3-phosphate + 5-amino-1-(5-phospho-beta-D-ribosyl)imidazole-4-carboxamide + L-glutamate + H(+). Its pathway is amino-acid biosynthesis; L-histidine biosynthesis; L-histidine from 5-phospho-alpha-D-ribose 1-diphosphate: step 5/9. In terms of biological role, IGPS catalyzes the conversion of PRFAR and glutamine to IGP, AICAR and glutamate. The HisF subunit catalyzes the cyclization activity that produces IGP and AICAR from PRFAR using the ammonia provided by the HisH subunit. The chain is Imidazole glycerol phosphate synthase subunit HisF from Pseudomonas syringae pv. tomato (strain ATCC BAA-871 / DC3000).